A 193-amino-acid chain; its full sequence is 3-isopropylmalate dehydratase small subunit (193 aa).

It belongs to the LeuD family. LeuD type 1 subfamily. In terms of assembly, heterodimer of LeuC and LeuD.

It carries out the reaction (2R,3S)-3-isopropylmalate = (2S)-2-isopropylmalate. It functions in the pathway amino-acid biosynthesis; L-leucine biosynthesis; L-leucine from 3-methyl-2-oxobutanoate: step 2/4. In terms of biological role, catalyzes the isomerization between 2-isopropylmalate and 3-isopropylmalate, via the formation of 2-isopropylmaleate. The protein is 3-isopropylmalate dehydratase small subunit of Listeria monocytogenes serotype 4b (strain CLIP80459).